Consider the following 179-residue polypeptide: Large ribosomal subunit protein uL6 (179 aa).

Belongs to the universal ribosomal protein uL6 family. Part of the 50S ribosomal subunit.

Its function is as follows. This protein binds to the 23S rRNA, and is important in its secondary structure. It is located near the subunit interface in the base of the L7/L12 stalk, and near the tRNA binding site of the peptidyltransferase center. In Prochlorococcus marinus (strain MIT 9313), this protein is Large ribosomal subunit protein uL6.